Reading from the N-terminus, the 119-residue chain is Large ribosomal subunit protein bL20 (119 aa).

This sequence belongs to the bacterial ribosomal protein bL20 family.

In terms of biological role, binds directly to 23S ribosomal RNA and is necessary for the in vitro assembly process of the 50S ribosomal subunit. It is not involved in the protein synthesizing functions of that subunit. The sequence is that of Large ribosomal subunit protein bL20 from Dichelobacter nodosus (strain VCS1703A).